The primary structure comprises 508 residues: MHSAMSFLLLFSLCFLIHCFVFLLIKKKKAKTMDAKTVPPGPKKLPIIGNLHQLGKLPHRSLRCLSNEYGPLMLMQLGSVPALVVSSADTAREVFKRHDLAFSGRPAFYVAKKLTYDYSDITLAPYGEYWREVKKILVLELLSAKKVQSFEAIRDEEVARMVNFIARSSNPVNLSRLALSLSNNVICRIAFGKISGYEDGSEAKSKFEDIFHETEDFFGTVNIADFFPALSWINKFNGVETRLKENFKKLDSFLNQVIEEHLDSRRSKTEKEDIVDALLRIQGNPNETITLSSENIKGILVTVLLGGSDTSTAVLVWTMAELMRNPMVRRKAQQEVREIIKGQGKVGESDLSRLEYLKLIIKESLRLHPPGPLLIPRETIECCTIEGYKIPAKTRVFINAAAIATDSKVWENPYAFKPERFMDKTVDFKGEDFEMLPFGAGRRGCPGMNFAVPLIGLALANLLLQFDWKLPEGMIAEDLEMEEAPGITVHKKIPLCLVASPNRCAAQD.

The helical transmembrane segment at 5 to 25 (MSFLLLFSLCFLIHCFVFLLI) threads the bilayer. A heme-binding site is contributed by Cys-445.

It belongs to the cytochrome P450 family. Requires heme as cofactor.

The protein localises to the membrane. The catalysed reaction is beta-colubrine + reduced [NADPH--hemoprotein reductase] + O2 = 11-demethylbrucine + oxidized [NADPH--hemoprotein reductase] + H2O + H(+). It participates in alkaloid biosynthesis. In terms of biological role, monooxygenase involved in the biosynthesis of curare monoterpene indole alkaloids (MIAs), natural products such as strychnine, a neurotoxic compound used as a pesticide to control rodents, and its pharmacologically active derivatives, including brucine, used to regulate blood pressure. Curare alkaloids act as animal glycine receptor antagonists. Catalyzes the conversion of beta-colubrine to 11-deMe brucine. The polypeptide is Strychnine-11-hydroxylase (Strychnos nux-vomica (Poison nut)).